A 343-amino-acid polypeptide reads, in one-letter code: Dihydroorotase (343 aa).

Residues H14 and H16 each contribute to the Zn(2+) site. Residues 16-18 and N42 each bind substrate; that span reads HLR. Positions 100, 137, and 175 each coordinate Zn(2+). K100 carries the post-translational modification N6-carboxylysine. A substrate-binding site is contributed by H137. Position 220 (L220) interacts with substrate. D248 provides a ligand contact to Zn(2+). D248 is a catalytic residue. Substrate-binding residues include H252 and A264.

Belongs to the metallo-dependent hydrolases superfamily. DHOase family. Class II DHOase subfamily. Homodimer. Zn(2+) is required as a cofactor.

It catalyses the reaction (S)-dihydroorotate + H2O = N-carbamoyl-L-aspartate + H(+). The protein operates within pyrimidine metabolism; UMP biosynthesis via de novo pathway; (S)-dihydroorotate from bicarbonate: step 3/3. Catalyzes the reversible cyclization of carbamoyl aspartate to dihydroorotate. This is Dihydroorotase from Parasynechococcus marenigrum (strain WH8102).